A 699-amino-acid polypeptide reads, in one-letter code: DnaJ homolog subfamily C member 14 (699 aa).

Residues 1 to 230 (MAQKHPGEGG…RHRLGRKRSQ (230 aa)) form a disordered region. Over residues 75 to 84 (HGPPRGPGPP) the composition is skewed to pro residues. A compositionally biased stretch (acidic residues) spans 86-102 (AEEDPDQSEASSEESGV). Residues 117–133 (DGNSSFLSIPSTCNCQG) are compositionally biased toward polar residues. Residues 163 to 176 (GEDEELEGEYDEEE) show a composition bias toward acidic residues. A compositionally biased stretch (basic and acidic residues) spans 203–218 (PAKEDTREGGRRDPRS). Positions 219–228 (PGRHRLGRKR) are enriched in basic residues. A run of 3 helical transmembrane segments spans residues 251–271 (AGFWWLIELLVLVGEYVETCG), 301–321 (GWAQVMFQFLSQGFCYGAGLF), and 327–347 (LVGALLLLALALLLGCLQLGW). Residues 444-508 (NPFHVLGVEA…ERRKEYEMKR (65 aa)) form the J domain. A disordered region spans residues 655 to 699 (MSNGNFFAAPQPGPGATAASKPNSTVPKGEAKPKRRKKVRRPFQR). Positions 662–673 (AAPQPGPGATAA) are enriched in low complexity. A compositionally biased stretch (basic residues) spans 687-699 (PKRRKKVRRPFQR).

Interacts with the FxxxFxxxF motif of DRD1 via its C-terminal domain. Interacts with pestivirus nonstructural protein NS2.

Its subcellular location is the endoplasmic reticulum membrane. In terms of biological role, regulates the export of target proteins, such as DRD1, from the endoplasmic reticulum to the cell surface. Promotes cleavage of pestivirus polyprotein. This is DnaJ homolog subfamily C member 14 (DNAJC14) from Bos taurus (Bovine).